The chain runs to 249 residues: 1-(5-phosphoribosyl)-5-[(5-phosphoribosylamino)methylideneamino] imidazole-4-carboxamide isomerase (249 aa).

Catalysis depends on aspartate 8, which acts as the Proton acceptor. The Proton donor role is filled by aspartate 129.

It belongs to the HisA/HisF family.

It is found in the cytoplasm. It carries out the reaction 1-(5-phospho-beta-D-ribosyl)-5-[(5-phospho-beta-D-ribosylamino)methylideneamino]imidazole-4-carboxamide = 5-[(5-phospho-1-deoxy-D-ribulos-1-ylimino)methylamino]-1-(5-phospho-beta-D-ribosyl)imidazole-4-carboxamide. Its pathway is amino-acid biosynthesis; L-histidine biosynthesis; L-histidine from 5-phospho-alpha-D-ribose 1-diphosphate: step 4/9. This Magnetococcus marinus (strain ATCC BAA-1437 / JCM 17883 / MC-1) protein is 1-(5-phosphoribosyl)-5-[(5-phosphoribosylamino)methylideneamino] imidazole-4-carboxamide isomerase.